Consider the following 778-residue polypeptide: Ribonucleoside-diphosphate reductase large subunit (778 aa).

Substrate contacts are provided by residues serine 177, 192–193 (SC), glycine 221, 419–423 (NLCIE), and 613–617 (PTATS). A disulfide bridge links cysteine 193 with cysteine 439. Residue asparagine 419 is the Proton acceptor of the active site. Cysteine 421 acts as the Cysteine radical intermediate in catalysis. Glutamate 423 acts as the Proton acceptor in catalysis.

Belongs to the ribonucleoside diphosphate reductase large chain family. In terms of assembly, heterotetramer composed of a homodimer of the large subunit (R1) and a homodimer of the small subunit (R2). Larger multisubunit protein complex are also active, composed of (R1)n(R2)n.

It catalyses the reaction a 2'-deoxyribonucleoside 5'-diphosphate + [thioredoxin]-disulfide + H2O = a ribonucleoside 5'-diphosphate + [thioredoxin]-dithiol. Its activity is regulated as follows. Under complex allosteric control mediated by deoxynucleoside triphosphates and ATP binding. The type of nucleotide bound at the specificity site determines substrate preference. It seems probable that ATP makes the enzyme reduce CDP and UDP, dGTP favors ADP reduction and dTTP favors GDP reduction. Ribonucleoside-diphosphate reductase holoenzyme provides the precursors necessary for viral DNA synthesis. Allows virus growth in non-dividing cells. Catalyzes the biosynthesis of deoxyribonucleotides from the corresponding ribonucleotides. The sequence is that of Ribonucleoside-diphosphate reductase large subunit from Ornithodoros (relapsing fever ticks).